The sequence spans 338 residues: Mitochondrial genome maintenance exonuclease 1 (338 aa).

Residues 1-64 constitute a mitochondrion transit peptide; that stretch reads MKLPLTFCRL…RSVLSRGPAQ (64 aa). Residues D235, D248, and K250 contribute to the active site.

It belongs to the MGME1 family.

It is found in the mitochondrion. In terms of biological role, metal-dependent single-stranded DNA (ssDNA) exonuclease involved in mitochondrial genome maintenance. Has preference for 5'-3' exonuclease activity but is also capable of endonuclease activity on linear substrates. Necessary for maintenance of proper 7S DNA levels. Probably involved in mitochondrial DNA (mtDNA) repair, possibly via the processing of displaced DNA containing Okazaki fragments during RNA-primed DNA synthesis on the lagging strand or via processing of DNA flaps during long-patch base excision repair. Specifically binds 5-hydroxymethylcytosine (5hmC)-containing DNA in stem cells. In Mus musculus (Mouse), this protein is Mitochondrial genome maintenance exonuclease 1 (Mgme1).